Here is a 504-residue protein sequence, read N- to C-terminus: Maturase K (504 aa).

It belongs to the intron maturase 2 family. MatK subfamily.

It is found in the plastid. Its subcellular location is the chloroplast. Usually encoded in the trnK tRNA gene intron. Probably assists in splicing its own and other chloroplast group II introns. The polypeptide is Maturase K (Vauquelinia californica (Arizona rosewood)).